A 274-amino-acid polypeptide reads, in one-letter code: NADH-ubiquinone oxidoreductase chain 2 (274 aa).

8 helical membrane-spanning segments follow: residues 28–48 (MIIM…FWFP), 54–74 (LTWM…LMLI), 79–99 (IKYL…IGGL), 107–127 (LMAF…MFSE), 128–148 (SIWL…TFMF), 171–191 (FTLF…GFLP), 206–226 (FLLT…LRIC), and 254–274 (LIMT…YFMF).

The protein belongs to the complex I subunit 2 family.

Its subcellular location is the mitochondrion inner membrane. It catalyses the reaction a ubiquinone + NADH + 5 H(+)(in) = a ubiquinol + NAD(+) + 4 H(+)(out). Functionally, core subunit of the mitochondrial membrane respiratory chain NADH dehydrogenase (Complex I) that is believed to belong to the minimal assembly required for catalysis. Complex I functions in the transfer of electrons from NADH to the respiratory chain. The immediate electron acceptor for the enzyme is believed to be ubiquinone. The chain is NADH-ubiquinone oxidoreductase chain 2 (mt:ND2) from Drosophila sechellia (Fruit fly).